The chain runs to 270 residues: Sulfur carrier protein FdhD (270 aa).

2 stretches are compositionally biased toward basic and acidic residues: residues 1 to 10 (MSMQDHDRTE) and 20 to 30 (RHLDGSSRPDW). A disordered region spans residues 1–30 (MSMQDHDRTEQGMTSLAVTRHLDGSSRPDW). Residue Cys-117 is the Cysteine persulfide intermediate of the active site.

The protein belongs to the FdhD family.

It is found in the cytoplasm. Required for formate dehydrogenase (FDH) activity. Acts as a sulfur carrier protein that transfers sulfur from IscS to the molybdenum cofactor prior to its insertion into FDH. The polypeptide is Sulfur carrier protein FdhD (Chromobacterium violaceum (strain ATCC 12472 / DSM 30191 / JCM 1249 / CCUG 213 / NBRC 12614 / NCIMB 9131 / NCTC 9757 / MK)).